Consider the following 78-residue polypeptide: Short neurotoxin 342 (78 aa).

An N-terminal signal peptide occupies residues 1–21 (MKTLLLTLVVLTIVCLDLGYT). Intrachain disulfides connect Cys-24/Cys-43, Cys-38/Cys-57, Cys-59/Cys-70, and Cys-71/Cys-76.

Belongs to the three-finger toxin family. Short-chain subfamily. Type I alpha-neurotoxin sub-subfamily. In terms of tissue distribution, expressed by the venom gland.

It localises to the secreted. Functionally, binds to muscle nicotinic acetylcholine receptor (nAChR) and inhibit acetylcholine from binding to the receptor, thereby impairing neuromuscular transmission. In Drysdalia coronoides (White-lipped snake), this protein is Short neurotoxin 342.